Consider the following 74-residue polypeptide: Protein SlyX homolog (74 aa).

The disordered stretch occupies residues 52–74 (LKQMQENQSTDSDPADEPPPPHY).

It belongs to the SlyX family.

This chain is Protein SlyX homolog, found in Idiomarina loihiensis (strain ATCC BAA-735 / DSM 15497 / L2-TR).